The chain runs to 221 residues: Iron-sulfur cluster repair protein YtfE (221 aa).

It belongs to the RIC family. YtfE subfamily. As to quaternary structure, homodimer.

The protein resides in the cytoplasm. Its function is as follows. Di-iron-containing protein involved in the repair of iron-sulfur clusters damaged by oxidative and nitrosative stress conditions. This is Iron-sulfur cluster repair protein YtfE from Yersinia pseudotuberculosis serotype IB (strain PB1/+).